The primary structure comprises 653 residues: Macrolide export ATP-binding/permease protein MacB (653 aa).

The ABC transporter domain occupies 6-244 (IELQGVSRSY…PPLLPCSAHP (239 aa)). Position 42–49 (42–49 (GSSGSGKS)) interacts with ATP. The next 4 helical transmembrane spans lie at 275 to 295 (LLTM…VGLG), 525 to 545 (FSVL…LGVM), 576 to 596 (FLIE…LLAL), and 616 to 636 (WPAV…FGYW).

Belongs to the ABC transporter superfamily. Macrolide exporter (TC 3.A.1.122) family. In terms of assembly, homodimer. Part of the tripartite efflux system MacAB-TolC, which is composed of an inner membrane transporter, MacB, a periplasmic membrane fusion protein, MacA, and an outer membrane component, TolC. The complex forms a large protein conduit and can translocate molecules across both the inner and outer membranes. Interacts with MacA.

The protein localises to the cell inner membrane. Its function is as follows. Part of the tripartite efflux system MacAB-TolC. MacB is a non-canonical ABC transporter that contains transmembrane domains (TMD), which form a pore in the inner membrane, and an ATP-binding domain (NBD), which is responsible for energy generation. Confers resistance against macrolides. The chain is Macrolide export ATP-binding/permease protein MacB from Sodalis glossinidius (strain morsitans).